An 88-amino-acid polypeptide reads, in one-letter code: UPF0297 protein STER_1937 (88 aa).

This sequence belongs to the UPF0297 family.

This Streptococcus thermophilus (strain ATCC BAA-491 / LMD-9) protein is UPF0297 protein STER_1937.